Consider the following 360-residue polypeptide: NAD(P)H-quinone oxidoreductase subunit 1, chloroplastic (360 aa).

9 helical membrane-spanning segments follow: residues 27–47 (IWIF…VLVI), 98–118 (FSIG…VIPF), 129–149 (IGIF…LMSG), 165–185 (AAQS…ISLL), 203–223 (FWGW…ISSL), 248–268 (YSGI…LISS), 269–289 (LFVT…ISIL), 297–317 (IFGT…FLFI), and 340–360 (FLLP…LFSL).

It belongs to the complex I subunit 1 family. NDH is composed of at least 16 different subunits, 5 of which are encoded in the nucleus.

It is found in the plastid. It localises to the chloroplast thylakoid membrane. The catalysed reaction is a plastoquinone + NADH + (n+1) H(+)(in) = a plastoquinol + NAD(+) + n H(+)(out). It carries out the reaction a plastoquinone + NADPH + (n+1) H(+)(in) = a plastoquinol + NADP(+) + n H(+)(out). In terms of biological role, NDH shuttles electrons from NAD(P)H:plastoquinone, via FMN and iron-sulfur (Fe-S) centers, to quinones in the photosynthetic chain and possibly in a chloroplast respiratory chain. The immediate electron acceptor for the enzyme in this species is believed to be plastoquinone. Couples the redox reaction to proton translocation, and thus conserves the redox energy in a proton gradient. In Barbarea verna (Land cress), this protein is NAD(P)H-quinone oxidoreductase subunit 1, chloroplastic.